Here is a 1754-residue protein sequence, read N- to C-terminus: Probable outer membrane protein PmpB (1754 aa).

The first 14 residues, 1-14, serve as a signal peptide directing secretion; the sequence is MSSMKWLSATAVFA. 2 stretches are compositionally biased toward low complexity: residues 68–105 and 212–232; these read NIPTTDTTTPTNSNSSSSNGETASVSEDSDSTTTTPDP and SETSGSSSSSGNDSVSSPSSS. Disordered regions lie at residues 68-109, 190-235, 252-271, 397-438, 621-668, and 1299-1332; these read NIPT…KGGG, SSNS…SRAE, PAAQTDTETSTPSHKPGSGG, NADA…ATAK, AAEN…STPS, and TSSASGGSGVSSSIPTNPKRISAAAPSGSAATTP. Composition is skewed to polar residues over residues 252–264 and 402–412; these read PAAQTDTETSTPS and ASSSPQSGSGA. Composition is skewed to low complexity over residues 413 to 427, 636 to 668, 1299 to 1311, and 1320 to 1332; these read TTVSNSGDSSSGSDS, PTADTAEQPAAASAATSTPESAPVVSTALSTPS, TSSASGGSGVSSS, and SAAAPSGSAATTP. The Autotransporter domain occupies 1461–1754; sequence DDIAYNNFWV…MTSCGARMIF (294 aa).

The protein belongs to the PMP outer membrane protein family.

It localises to the secreted. Its subcellular location is the cell wall. The protein localises to the cell outer membrane. The polypeptide is Probable outer membrane protein PmpB (pmpB) (Chlamydia trachomatis serovar D (strain ATCC VR-885 / DSM 19411 / UW-3/Cx)).